Here is a 140-residue protein sequence, read N- to C-terminus: Putative pre-16S rRNA nuclease (140 aa).

The protein belongs to the YqgF nuclease family.

The protein resides in the cytoplasm. Functionally, could be a nuclease involved in processing of the 5'-end of pre-16S rRNA. The protein is Putative pre-16S rRNA nuclease of Moorella thermoacetica (strain ATCC 39073 / JCM 9320).